Here is a 366-residue protein sequence, read N- to C-terminus: MRFVDEAVIKAISGNGGHGCVSFRREKFIPRGGPDGGDGGNGGNVVFKASTRLLSLYDFRLKRVYQAENGRPGQGSQMHGRGGKDLVVEMPVGTLVFERGENGAESLIADLSEPDVEVVIAHGGRGGKGNEHFKSSTMQAPRFSQPGEPGEEKSLRLELKILADAGLLGLPNAGKSTFISQVSAAKPKIAAYPFTTLVPNLGVMMDEFDPDRRMVIADIPGLIEGAHEGQGLGHRFLKHVERTRFLVHILSIEDVDMENPWAGFDLINDELQRFDETLGSREQIQVVNKIDLLPPEEVDGLRARAEADGRRIFFISALEGEGLDAVVSEMWRMLAELDRNVPLDSSRQIEPEPEEEFDVEVVWVRE.

Positions 1–162 (MRFVDEAVIK…KSLRLELKIL (162 aa)) constitute an Obg domain. Residues 125–150 (RGGKGNEHFKSSTMQAPRFSQPGEPG) form a disordered region. An OBG-type G domain is found at 163 to 335 (ADAGLLGLPN…VVSEMWRMLA (173 aa)). Residues 169–176 (GLPNAGKS), 194–198 (FTTLV), 218–221 (DIPG), 288–291 (NKID), and 316–318 (SAL) each bind GTP. Residues Ser176 and Thr196 each coordinate Mg(2+).

It belongs to the TRAFAC class OBG-HflX-like GTPase superfamily. OBG GTPase family. In terms of assembly, monomer. It depends on Mg(2+) as a cofactor.

It localises to the cytoplasm. Its function is as follows. An essential GTPase which binds GTP, GDP and possibly (p)ppGpp with moderate affinity, with high nucleotide exchange rates and a fairly low GTP hydrolysis rate. Plays a role in control of the cell cycle, stress response, ribosome biogenesis and in those bacteria that undergo differentiation, in morphogenesis control. This is GTPase Obg from Oleidesulfovibrio alaskensis (strain ATCC BAA-1058 / DSM 17464 / G20) (Desulfovibrio alaskensis).